Here is a 325-residue protein sequence, read N- to C-terminus: Small ribosomal subunit protein RACK1 (325 aa).

7 WD repeats span residues 5–48 (QMKL…WDVD), 58–99 (IGRP…WDLN), 100–141 (QGVS…WNTL), 143–186 (QCKY…WNLG), 187–227 (NCRL…LWDL), 228–268 (NEGK…WDLE), and 269–320 (DKKE…YQVS).

It belongs to the WD repeat G protein beta family. Ribosomal protein RACK1 subfamily.

Its function is as follows. Required for the expression of antimicrobial peptide nlp-29 in response to fungal infection or physical injury. The polypeptide is Small ribosomal subunit protein RACK1 (rack-1) (Caenorhabditis elegans).